The sequence spans 234 residues: Purine nucleoside phosphorylase DeoD-type (234 aa).

H4 lines the a purine D-ribonucleoside pocket. Residues G20, R24, R43, and 87 to 90 (RVGT) contribute to the phosphate site. A purine D-ribonucleoside-binding positions include 179 to 181 (EME) and 203 to 204 (SN).

Belongs to the PNP/UDP phosphorylase family. Homohexamer; trimer of homodimers.

It catalyses the reaction a purine D-ribonucleoside + phosphate = a purine nucleobase + alpha-D-ribose 1-phosphate. It carries out the reaction a purine 2'-deoxy-D-ribonucleoside + phosphate = a purine nucleobase + 2-deoxy-alpha-D-ribose 1-phosphate. In terms of biological role, catalyzes the reversible phosphorolytic breakdown of the N-glycosidic bond in the beta-(deoxy)ribonucleoside molecules, with the formation of the corresponding free purine bases and pentose-1-phosphate. In Latilactobacillus sakei subsp. sakei (strain 23K) (Lactobacillus sakei subsp. sakei), this protein is Purine nucleoside phosphorylase DeoD-type.